Reading from the N-terminus, the 259-residue chain is 3-deoxy-manno-octulosonate cytidylyltransferase (259 aa).

This sequence belongs to the KdsB family.

The protein localises to the cytoplasm. It carries out the reaction 3-deoxy-alpha-D-manno-oct-2-ulosonate + CTP = CMP-3-deoxy-beta-D-manno-octulosonate + diphosphate. The protein operates within nucleotide-sugar biosynthesis; CMP-3-deoxy-D-manno-octulosonate biosynthesis; CMP-3-deoxy-D-manno-octulosonate from 3-deoxy-D-manno-octulosonate and CTP: step 1/1. It participates in bacterial outer membrane biogenesis; lipopolysaccharide biosynthesis. Functionally, activates KDO (a required 8-carbon sugar) for incorporation into bacterial lipopolysaccharide in Gram-negative bacteria. This chain is 3-deoxy-manno-octulosonate cytidylyltransferase, found in Protochlamydia amoebophila (strain UWE25).